The sequence spans 277 residues: Sulfate transport system permease protein CysT (277 aa).

7 helical membrane-spanning segments follow: residues 17–37 (LGTS…ALVM), 64–84 (LLSA…MAWI), 99–119 (LMDL…ASLF), 136–156 (VTYT…PFVV), 185–205 (FCKV…ALSF), 215–235 (VIFI…MIFV), and 243–263 (PAAS…LFSI). The ABC transmembrane type-1 domain occupies 60–263 (YKVTLLSAFV…AASLLLLFSI (204 aa)).

This sequence belongs to the binding-protein-dependent transport system permease family. CysTW subfamily. In terms of assembly, the complex is composed of two ATP-binding proteins (CysA), two transmembrane proteins (CysT and CysW) and a solute-binding protein (CysP).

It is found in the cell inner membrane. In terms of biological role, part of the ABC transporter complex CysAWTP (TC 3.A.1.6.1) involved in sulfate/thiosulfate import. Probably responsible for the translocation of the substrate across the membrane. This chain is Sulfate transport system permease protein CysT (cysU), found in Escherichia coli (strain K12).